Here is a 197-residue protein sequence, read N- to C-terminus: Probable molybdenum cofactor guanylyltransferase (197 aa).

Residues 12–14, Lys24, Asp71, and Asp103 contribute to the GTP site; that span reads LAG. Asp103 provides a ligand contact to Mg(2+).

It belongs to the MobA family. Requires Mg(2+) as cofactor.

The protein resides in the cytoplasm. It carries out the reaction Mo-molybdopterin + GTP + H(+) = Mo-molybdopterin guanine dinucleotide + diphosphate. Functionally, transfers a GMP moiety from GTP to Mo-molybdopterin (Mo-MPT) cofactor (Moco or molybdenum cofactor) to form Mo-molybdopterin guanine dinucleotide (Mo-MGD) cofactor. The chain is Probable molybdenum cofactor guanylyltransferase from Mycobacterium avium (strain 104).